The chain runs to 496 residues: Beta-amylase (496 aa).

Residues Asp-54, His-94, and Asp-102 each coordinate substrate. Glu-187 functions as the Proton donor in the catalytic mechanism. Substrate is bound by residues Lys-296, His-301, and Thr-343. Glu-381 (proton acceptor) is an active-site residue. Substrate is bound by residues 382 to 383 and Arg-421; that span reads NA.

It belongs to the glycosyl hydrolase 14 family.

It catalyses the reaction Hydrolysis of (1-&gt;4)-alpha-D-glucosidic linkages in polysaccharides so as to remove successive maltose units from the non-reducing ends of the chains.. This is Beta-amylase (BMY1) from Trifolium repens (Creeping white clover).